Here is a 685-residue protein sequence, read N- to C-terminus: Frizzled-8 (685 aa).

The N-terminal stretch at 1–27 (MEWGYLLEVTSLLAALAVLQRSSGAAA) is a signal peptide. The Extracellular portion of the chain corresponds to 28–272 (ASAKELACQE…NPFFSQDERA (245 aa)). In terms of domain architecture, FZ spans 30 to 151 (AKELACQEIT…GNPDTLCMDY (122 aa)). Disulfide bonds link C35–C96, C43–C89, C80–C118, C107–C148, and C111–C135. N49 carries an N-linked (GlcNAc...) asparagine glycan. Residue 71-78 (QFWPLVEI) participates in hexadecanoate binding. The interval 95-100 (ICLEDY) is wnt-binding. The wnt-binding stretch occupies residues 147–152 (LCMDYN). The N-linked (GlcNAc...) asparagine glycan is linked to N152. Residues 155 to 223 (DLTTAAPSPP…KARPPGGGAA (69 aa)) form a disordered region. Pro residues predominate over residues 161-176 (PSPPRRLPPPPPPGEQ). Composition is skewed to low complexity over residues 177–187 (PPSGSGHSRPP) and 200–223 (GSGD…GGAA). The chain crosses the membrane as a helical span at residues 273 to 293 (FTVFWIGLWSVLCFVSTFATV). Residues 294 to 309 (STFLIDMERFKYPERP) lie on the Cytoplasmic side of the membrane. The helical transmembrane segment at 310–330 (IIFLSACYLFVSVGYLVRLVA) threads the bilayer. At 331 to 394 (GHEKVACSGG…RYETTGPALC (64 aa)) the chain is on the extracellular side. Residues 395 to 415 (TVVFLLVYFFGMASSIWWVIL) form a helical membrane-spanning segment. Over 416-437 (SLTWFLAAGMKWGNEAIAGYSQ) the chain is Cytoplasmic. The helical transmembrane segment at 438-458 (YFHLAAWLVPSVKSIAVLALS) threads the bilayer. Residues 459 to 481 (SVDGDPVAGICYVGNQSLDNLRG) lie on the Extracellular side of the membrane. Residue N473 is glycosylated (N-linked (GlcNAc...) asparagine). Residues 482-502 (FVLAPLVIYLFIGTMFLLAGF) traverse the membrane as a helical segment. The Cytoplasmic portion of the chain corresponds to 503 to 530 (VSLFRIRSVIKQQGGPTKTHKLEKLMIR). A helical transmembrane segment spans residues 531 to 551 (LGLFTVLYTVPAAVVVACLFY). Residues 552 to 582 (EQHNRPRWEATHNCPCLRDLQPDQARRPDYA) are Extracellular-facing. The chain crosses the membrane as a helical span at residues 583-603 (VFMLKYFMCLVVGITSGVWVW). The Cytoplasmic segment spans residues 604 to 685 (SGKTLESWRA…YPKQMPLSQV (82 aa)). Positions 606 to 611 (KTLESW) match the Lys-Thr-X-X-X-Trp motif, mediates interaction with the PDZ domain of Dvl family members motif. Residues 631–655 (AGGSGPGGSGPGPGGGGGHGGGGGS) show a composition bias toward gly residues. The interval 631–656 (AGGSGPGGSGPGPGGGGGHGGGGGSL) is disordered. The short motif at 683 to 685 (SQV) is the PDZ-binding element.

Belongs to the G-protein coupled receptor Fz/Smo family. Component of a Wnt-signaling complex that contains a WNT protein, a FZD protein and LRP5 or LRP6. Interacts directly with LRP5 or LRP6; the interaction is promoted by Wnt-binding and signaling and inhibited by DKK1. Interacts (via the PDZ-binding motif) with GPOC (via its PDZ domain). Interacts with RSPO1 and RSPO3. Interacts with glypican GPC3. In terms of processing, ubiquitinated by ZNRF3, leading to its degradation by the proteasome. As to expression, expressed in chondrocytes.

The protein localises to the membrane. Its subcellular location is the golgi apparatus. The protein resides in the cell membrane. In terms of biological role, receptor for Wnt proteins. Component of the Wnt-Fzd-LRP5-LRP6 complex that triggers beta-catenin signaling through inducing aggregation of receptor-ligand complexes into ribosome-sized signalosomes. The beta-catenin canonical signaling pathway leads to the activation of disheveled proteins, inhibition of GSK-3 kinase, nuclear accumulation of beta-catenin and activation of Wnt target genes. A second signaling pathway involving PKC and calcium fluxes has been seen for some family members, but it is not yet clear if it represents a distinct pathway or if it can be integrated in the canonical pathway, as PKC seems to be required for Wnt-mediated inactivation of GSK-3 kinase. Both pathways seem to involve interactions with G-proteins. May be involved in transduction and intercellular transmission of polarity information during tissue morphogenesis and/or in differentiated tissues. Coreceptor along with RYK of Wnt proteins, such as WNT1. This is Frizzled-8 (Fzd8) from Mus musculus (Mouse).